Consider the following 453-residue polypeptide: Trigger factor (453 aa).

Residues 171-256 (GDRVTINFKG…ATSIEAPQDI (86 aa)) form the PPIase FKBP-type domain.

It belongs to the FKBP-type PPIase family. Tig subfamily.

It is found in the cytoplasm. The enzyme catalyses [protein]-peptidylproline (omega=180) = [protein]-peptidylproline (omega=0). In terms of biological role, involved in protein export. Acts as a chaperone by maintaining the newly synthesized protein in an open conformation. Functions as a peptidyl-prolyl cis-trans isomerase. This is Trigger factor from Bradyrhizobium diazoefficiens (strain JCM 10833 / BCRC 13528 / IAM 13628 / NBRC 14792 / USDA 110).